We begin with the raw amino-acid sequence, 526 residues long: Nucleolar complex protein 4 homolog A (526 aa).

Transmembrane regions (helical) follow at residues 307 to 327, 358 to 378, and 386 to 406; these read AAYD…FILI, FFHL…LVAA, and LALT…CNLI.

This sequence belongs to the CBF/MAK21 family.

The protein localises to the nucleus membrane. Its subcellular location is the nucleus. The protein resides in the nucleolus. The sequence is that of Nucleolar complex protein 4 homolog A (noc4l-a) from Xenopus laevis (African clawed frog).